The following is a 612-amino-acid chain: Elongation factor 4 (612 aa).

In terms of domain architecture, tr-type G spans 11–193 (KHIRNFSIVA…RIVTDISAPT (183 aa)). GTP contacts are provided by residues 23 to 28 (DHGKST) and 140 to 143 (NKID).

This sequence belongs to the TRAFAC class translation factor GTPase superfamily. Classic translation factor GTPase family. LepA subfamily.

The protein resides in the cell membrane. The enzyme catalyses GTP + H2O = GDP + phosphate + H(+). Its function is as follows. Required for accurate and efficient protein synthesis under certain stress conditions. May act as a fidelity factor of the translation reaction, by catalyzing a one-codon backward translocation of tRNAs on improperly translocated ribosomes. Back-translocation proceeds from a post-translocation (POST) complex to a pre-translocation (PRE) complex, thus giving elongation factor G a second chance to translocate the tRNAs correctly. Binds to ribosomes in a GTP-dependent manner. In Lactobacillus delbrueckii subsp. bulgaricus (strain ATCC 11842 / DSM 20081 / BCRC 10696 / JCM 1002 / NBRC 13953 / NCIMB 11778 / NCTC 12712 / WDCM 00102 / Lb 14), this protein is Elongation factor 4.